Reading from the N-terminus, the 184-residue chain is Heme transporter hrg-4 (184 aa).

The chain crosses the membrane as a helical span at residues 19–39; sequence IGWTIFGIVFGISAILTYAIK. N-linked (GlcNAc...) asparagine glycosylation occurs at asparagine 42. 3 helical membrane passes run 46–66, 87–107, and 124–146; these read TATTAIATLFACETLYLYWAL, VFIGLLGLLGCLVCYIIAGIT, and IYFSKFAAMYGENLWFTGSWSLV.

It belongs to the HRG family.

It is found in the cell membrane. Functionally, heme transporter that mediates heme uptake across the plasma membrane. This is Heme transporter hrg-4 from Caenorhabditis elegans.